The sequence spans 217 residues: 3,4-dihydroxy-2-butanone 4-phosphate synthase (217 aa).

Residues 37–38, aspartate 42, 150–154, and glutamate 174 contribute to the D-ribulose 5-phosphate site; these read RE and RRGHT. Mg(2+) is bound at residue glutamate 38. Residue histidine 153 participates in Mg(2+) binding.

It belongs to the DHBP synthase family. As to quaternary structure, homodimer. Mg(2+) serves as cofactor. Requires Mn(2+) as cofactor.

The catalysed reaction is D-ribulose 5-phosphate = (2S)-2-hydroxy-3-oxobutyl phosphate + formate + H(+). It participates in cofactor biosynthesis; riboflavin biosynthesis; 2-hydroxy-3-oxobutyl phosphate from D-ribulose 5-phosphate: step 1/1. Its function is as follows. Catalyzes the conversion of D-ribulose 5-phosphate to formate and 3,4-dihydroxy-2-butanone 4-phosphate. This Aeromonas salmonicida (strain A449) protein is 3,4-dihydroxy-2-butanone 4-phosphate synthase.